Consider the following 331-residue polypeptide: Protein-methionine-sulfoxide reductase catalytic subunit MsrP (331 aa).

Positions 1-57 form a signal peptide, tat-type signal; it reads MLIKKTLRAALAGDDIPRSEITPRAVFEHRRRILQAAGAAAAGGLVGAHGLALAAYA. Residues Asn-90, 93 to 94, Cys-148, Thr-183, Asn-231, Arg-236, and 247 to 249 each bind Mo-molybdopterin; these read YE and SAK.

It belongs to the MsrP family. In terms of assembly, heterodimer of a catalytic subunit (MsrP) and a heme-binding subunit (MsrQ). Requires Mo-molybdopterin as cofactor. Post-translationally, predicted to be exported by the Tat system. The position of the signal peptide cleavage has not been experimentally proven.

It localises to the periplasm. It catalyses the reaction L-methionyl-[protein] + a quinone + H2O = L-methionyl-(S)-S-oxide-[protein] + a quinol. It carries out the reaction L-methionyl-[protein] + a quinone + H2O = L-methionyl-(R)-S-oxide-[protein] + a quinol. Part of the MsrPQ system that repairs oxidized periplasmic proteins containing methionine sulfoxide residues (Met-O), using respiratory chain electrons. Thus protects these proteins from oxidative-stress damage caused by reactive species of oxygen and chlorine generated by the host defense mechanisms. MsrPQ is essential for the maintenance of envelope integrity under bleach stress, rescuing a wide series of structurally unrelated periplasmic proteins from methionine oxidation. The catalytic subunit MsrP is non-stereospecific, being able to reduce both (R-) and (S-) diastereoisomers of methionine sulfoxide. This chain is Protein-methionine-sulfoxide reductase catalytic subunit MsrP, found in Burkholderia mallei (strain ATCC 23344).